The chain runs to 270 residues: Phosphodiesterase YaeI (270 aa).

A divalent metal cation contacts are provided by aspartate 56, histidine 58, aspartate 88, asparagine 120, histidine 209, and histidine 211.

The protein belongs to the metallophosphoesterase superfamily. The cofactor is a divalent metal cation.

Its function is as follows. Shows phosphodiesterase activity, hydrolyzing phosphodiester bond in the artificial chromogenic substrate bis-p-nitrophenyl phosphate (bis-pNPP). In Escherichia coli (strain K12), this protein is Phosphodiesterase YaeI (yaeI).